The chain runs to 334 residues: L-lactate dehydrogenase C chain (334 aa).

NAD(+) contacts are provided by residues 30–58 (GQVG…VEDK) and Arg100. 3 residues coordinate substrate: Arg107, Asn139, and Arg170. Asn139 is a binding site for NAD(+). His194 serves as the catalytic Proton acceptor. Thr249 serves as a coordination point for substrate.

Belongs to the LDH/MDH superfamily. LDH family. In terms of assembly, homotetramer. In terms of tissue distribution, eye and liver.

The protein localises to the cytoplasm. The enzyme catalyses (S)-lactate + NAD(+) = pyruvate + NADH + H(+). The protein operates within fermentation; pyruvate fermentation to lactate; (S)-lactate from pyruvate: step 1/1. The protein is L-lactate dehydrogenase C chain (ldhc) of Fundulus heteroclitus (Killifish).